The following is a 193-amino-acid chain: MMRHINEILIAKEKYFQSSINDHDLKEIILKIQQDCITYHSTDLLGSSLLHKLILILIIEKFKSLLLFEKNIISIFDLECVNFQEEMNSIMYVMNEVEKQYLRSDKFSTHNHSLTGGLFASNSVIRRINFPKEISKILRKWLKKHLTYPYPSKIEKKMLSKETGLKLSQIDNWFANARRRILPFMKEKFIDFD.

A DNA-binding region (homeobox; TALE-type) is located at residues 123 to 185; the sequence is SVIRRINFPK…NARRRILPFM (63 aa).

It belongs to the TALE/KNOX homeobox family.

It localises to the nucleus. In Encephalitozoon cuniculi (strain GB-M1) (Microsporidian parasite), this protein is Homeobox protein HD-12 (HD-12).